Here is a 443-residue protein sequence, read N- to C-terminus: D(2) dopamine receptor (443 aa).

The Extracellular segment spans residues 1 to 37; that stretch reads MDPLNLSWYDDDLERQNWSRPFNGSDGKADRPHYNYY. N5, N17, and N23 each carry an N-linked (GlcNAc...) asparagine glycan. Residues 38-60 traverse the membrane as a helical segment; the sequence is ATLLTLLIAVIVFGNVLVCMAVS. Over 61-70 the chain is Cytoplasmic; it reads REKALQTTTN. A helical transmembrane segment spans residues 71–93; the sequence is YLIVSLAVADLLVATLVMPWVVY. Over 94-108 the chain is Extracellular; that stretch reads LEVVGEWKFSRIHCD. C107 and C182 are joined by a disulfide. Residues 109-130 form a helical membrane-spanning segment; sequence IFVTLDVMMCTASILNLCAISI. Over 131–151 the chain is Cytoplasmic; sequence DRYTAVAMPMLYNTRYSSKRR. The helical transmembrane segment at 152-172 threads the bilayer; that stretch reads VTVMISIVWVLSFTISCPLLF. Residues 173 to 188 lie on the Extracellular side of the membrane; it reads GLNNADQNECIIANPA. Residues 189–213 form a helical membrane-spanning segment; sequence FVVYSSIVSFYVPFIVTLLVYIKIY. Positions 211 to 373 are interaction with PPP1R9B; the sequence is KIYIVLRRRR…SQQKEKKATQ (163 aa). Over 214-373 the chain is Cytoplasmic; the sequence is IVLRRRRKRV…SQQKEKKATQ (160 aa). The segment at 281 to 332 is disordered; it reads MEMLSSTSPPERTRYSPIPPSHHQLTLPDPSHHGLHSTPDSPAKPEKNGHAK. The span at 323 to 332 shows a compositional bias: basic and acidic residues; the sequence is AKPEKNGHAK. A helical membrane pass occupies residues 374 to 395; it reads MLAIVLGVFIICWLPFFITHIL. At 396–409 the chain is on the extracellular side; the sequence is NIHCDCNIPPVLYS. The cysteines at positions 399 and 401 are disulfide-linked. A helical transmembrane segment spans residues 410-431; that stretch reads AFTWLGYVNSAVNPIIYTTFNI. The Cytoplasmic portion of the chain corresponds to 432-443; that stretch reads EFRKAFLKILHC. Residue C443 is the site of S-palmitoyl cysteine attachment.

It belongs to the G-protein coupled receptor 1 family. As to quaternary structure, forms homo- and heterooligomers with DRD4. The interaction with DRD4 may modulate agonist-induced downstream signaling. Interacts with CADPS and CADPS2. Interacts with GPRASP1, PPP1R9B and CLIC6. Interacts with ARRB2. Interacts with HTR2A. Interacts with GNAI2 isoform sGi2, the interaction allows the creation of an intracellular pool of DRD2 that can be released to cell surface upon agonist stimulation. Interacts with DRD1. Interacts with KCNA2. Post-translationally, palmitoylated. Palmitoylation which is required for proper localization to the plasma membrane and stability of the receptor could be carried on by ZDHHC4, ZDHHC3 and ZDHHC8. As to expression, expressed in the anterior pituitary gland.

Its subcellular location is the cell membrane. It localises to the golgi apparatus membrane. Its function is as follows. Dopamine receptor whose activity is mediated by G proteins which inhibit adenylyl cyclase. Positively regulates postnatal regression of retinal hyaloid vessels via suppression of VEGFR2/KDR activity, downstream of OPN5. The polypeptide is D(2) dopamine receptor (DRD2) (Homo sapiens (Human)).